Here is a 245-residue protein sequence, read N- to C-terminus: Transmembrane protein 69 (245 aa).

The next 5 membrane-spanning stretches (helical) occupy residues 97-117 (ALYI…LMVI), 122-142 (IPVL…FLGG), 159-179 (YINL…ILFS), 185-205 (AIVT…FLLP), and 216-236 (IVST…ENIY).

The protein localises to the membrane. In Mus musculus (Mouse), this protein is Transmembrane protein 69 (Tmem69).